The primary structure comprises 88 residues: Cell division topological specificity factor (88 aa).

It belongs to the MinE family.

In terms of biological role, prevents the cell division inhibition by proteins MinC and MinD at internal division sites while permitting inhibition at polar sites. This ensures cell division at the proper site by restricting the formation of a division septum at the midpoint of the long axis of the cell. This is Cell division topological specificity factor from Herminiimonas arsenicoxydans.